We begin with the raw amino-acid sequence, 194 residues long: Peroxynitrite isomerase 1 (194 aa).

Residues Gly-40–Gly-46 carry the GXWXGXG motif. Residues Lys-157 and His-184 each coordinate heme b.

Belongs to the nitrobindin family. As to quaternary structure, homodimer. It depends on heme b as a cofactor.

The catalysed reaction is peroxynitrite = nitrate. It participates in nitrogen metabolism. Its function is as follows. Heme-binding protein able to scavenge peroxynitrite and to protect free L-tyrosine against peroxynitrite-mediated nitration, by acting as a peroxynitrite isomerase that converts peroxynitrite to nitrate. Therefore, this protein likely plays a role in peroxynitrite sensing and in the detoxification of reactive nitrogen and oxygen species (RNS and ROS, respectively). Is able to bind nitric oxide (NO) in vitro, but may act as a sensor of peroxynitrite levels in vivo. This chain is Peroxynitrite isomerase 1, found in Mycobacterium ulcerans (strain Agy99).